A 381-amino-acid chain; its full sequence is Cytochrome b (381 aa).

A run of 4 helical transmembrane segments spans residues 36–56 (FGSL…FLTM), 80–101 (WLIR…YIHI), 116–136 (WMVG…GYVL), and 181–201 (FYTF…IHLL). Heme b is bound by residues H86 and H100. Residues H185 and H199 each coordinate heme b. A ubiquinone is bound at residue H204. The next 4 membrane-spanning stretches (helical) occupy residues 229 to 249 (FKDM…TLTN), 291 to 311 (LGGV…PLTF), 323 to 343 (MNQI…WIGA), and 350 to 370 (YVFV…INPM).

This sequence belongs to the cytochrome b family. In terms of assembly, the main subunits of complex b-c1 are: cytochrome b, cytochrome c1 and the Rieske protein. It depends on heme b as a cofactor.

The protein localises to the mitochondrion inner membrane. Its function is as follows. Component of the ubiquinol-cytochrome c reductase complex (complex III or cytochrome b-c1 complex) that is part of the mitochondrial respiratory chain. The b-c1 complex mediates electron transfer from ubiquinol to cytochrome c. Contributes to the generation of a proton gradient across the mitochondrial membrane that is then used for ATP synthesis. The protein is Cytochrome b (MT-CYB) of Ostrinia nubilalis (European corn borer).